Consider the following 210-residue polypeptide: Uridine kinase (210 aa).

Residue 13–20 (GGSGSGKT) participates in ATP binding.

It belongs to the uridine kinase family.

The protein resides in the cytoplasm. It catalyses the reaction uridine + ATP = UMP + ADP + H(+). The catalysed reaction is cytidine + ATP = CMP + ADP + H(+). The protein operates within pyrimidine metabolism; CTP biosynthesis via salvage pathway; CTP from cytidine: step 1/3. It participates in pyrimidine metabolism; UMP biosynthesis via salvage pathway; UMP from uridine: step 1/1. This is Uridine kinase from Oceanobacillus iheyensis (strain DSM 14371 / CIP 107618 / JCM 11309 / KCTC 3954 / HTE831).